The sequence spans 89 residues: Small ribosomal subunit protein bS20 (89 aa).

The protein belongs to the bacterial ribosomal protein bS20 family.

In terms of biological role, binds directly to 16S ribosomal RNA. This chain is Small ribosomal subunit protein bS20, found in Syntrophus aciditrophicus (strain SB).